A 481-amino-acid polypeptide reads, in one-letter code: MDQEALLVGRTLLKRGIPTIPFILASQALEKLAYFGLVPNMILFLTVEYGMGTAEAANILFLWSAATNFFPLVGAFIADSYTGRFPLIGFGSSISLTGMVLLWLTTIIRPECDKLTNVCQPTTLLKSVLLYSFFALTAIGAGGVRSSCLAFAADQLQPNQTSRVTTSSLETLFNWYYFSVMVACFLSQSLLVFVQTTYGWQIGFGVSVAAMALSVALFFAASPYYVRFQKPTRNSRNPWKLCRVQQVEDLKSLINVIPIWSTGIILSLVTACQVSFIVLQAKTMDRHTFIQGFEIPPGSYGIFLVISFLLFLGLYDLVIVPLLSWALREPFRLGVMVRMWAGYVISVLCISALAATEYARRKTARDESGTKLSAMWLLPYMILGGIAEALNTIAQNEFFYSELPKTMSSVATTLSSLNMAAASLISSWIITIVDVTTYGSWITENIDEGHLDYYYWLLVGLSLLNVLYFVWCKKSYGKCSI.

The next 12 membrane-spanning stretches (helical) occupy residues 32–52 (LAYFGLVPNMILFLTVEYGMG), 57–77 (ANILFLWSAATNFFPLVGAFI), 88–108 (IGFGSSISLTGMVLLWLTTII), 124–144 (LLKSVLLYSFFALTAIGAGGV), 173–193 (FNWYYFSVMVACFLSQSLLVF), 202–222 (IGFGVSVAAMALSVALFFAAS), 259–279 (IWSTGIILSLVTACQVSFIVL), 302–322 (IFLVISFLLFLGLYDLVIVPL), 333–353 (LGVMVRMWAGYVISVLCISAL), 374–394 (AMWLLPYMILGGIAEALNTIA), 422–442 (ASLISSWIITIVDVTTYGSWI), and 451–471 (LDYYYWLLVGLSLLNVLYFVW).

Belongs to the major facilitator superfamily. Proton-dependent oligopeptide transporter (POT/PTR) (TC 2.A.17) family. In terms of tissue distribution, expressed in roots.

Its subcellular location is the membrane. This is Protein NRT1/ PTR FAMILY 1.3 (NPF1.3) from Arabidopsis thaliana (Mouse-ear cress).